A 521-amino-acid polypeptide reads, in one-letter code: ATP synthase subunit beta (521 aa).

2 stretches are compositionally biased toward low complexity: residues 1 to 21 (MAKA…AAKA) and 28 to 42 (PKTT…TKSG). The disordered stretch occupies residues 1 to 42 (MAKAATPKTTAAAEAKPAAKAPAKKAAPKTTAAAKPAATKSG). 199–206 (GGAGVGKT) contributes to the ATP binding site.

Belongs to the ATPase alpha/beta chains family. F-type ATPases have 2 components, CF(1) - the catalytic core - and CF(0) - the membrane proton channel. CF(1) has five subunits: alpha(3), beta(3), gamma(1), delta(1), epsilon(1). CF(0) has three main subunits: a(1), b(2) and c(9-12). The alpha and beta chains form an alternating ring which encloses part of the gamma chain. CF(1) is attached to CF(0) by a central stalk formed by the gamma and epsilon chains, while a peripheral stalk is formed by the delta and b chains.

It localises to the cell inner membrane. The enzyme catalyses ATP + H2O + 4 H(+)(in) = ADP + phosphate + 5 H(+)(out). Produces ATP from ADP in the presence of a proton gradient across the membrane. The catalytic sites are hosted primarily by the beta subunits. The chain is ATP synthase subunit beta from Brucella abortus (strain 2308).